Here is a 482-residue protein sequence, read N- to C-terminus: Long chain base biosynthesis protein 1c (482 aa).

A helical transmembrane segment spans residues 33 to 53; the sequence is FGIHIDGHLVVEGLLIAAILF.

This sequence belongs to the class-II pyridoxal-phosphate-dependent aminotransferase family. In terms of assembly, heterodimer with LCB2. Component of the serine palmitoyltransferase (SPT) complex, composed of LCB1 and LCB2. Pyridoxal 5'-phosphate is required as a cofactor.

The protein localises to the endoplasmic reticulum membrane. It carries out the reaction L-serine + hexadecanoyl-CoA + H(+) = 3-oxosphinganine + CO2 + CoA. The protein operates within lipid metabolism; sphingolipid metabolism. Serine palmitoyltransferase (SPT). The heterodimer formed with LCB2 constitutes the catalytic core. The polypeptide is Long chain base biosynthesis protein 1c (Oryza sativa subsp. japonica (Rice)).